We begin with the raw amino-acid sequence, 285 residues long: 4-diphosphocytidyl-2-C-methyl-D-erythritol kinase (285 aa).

The active site involves Lys-12. 94–104 contacts ATP; the sequence is PAQAGMGGGSS. Residue Asp-136 is part of the active site.

Belongs to the GHMP kinase family. IspE subfamily.

The catalysed reaction is 4-CDP-2-C-methyl-D-erythritol + ATP = 4-CDP-2-C-methyl-D-erythritol 2-phosphate + ADP + H(+). It functions in the pathway isoprenoid biosynthesis; isopentenyl diphosphate biosynthesis via DXP pathway; isopentenyl diphosphate from 1-deoxy-D-xylulose 5-phosphate: step 3/6. Its function is as follows. Catalyzes the phosphorylation of the position 2 hydroxy group of 4-diphosphocytidyl-2C-methyl-D-erythritol. In Paracidovorax citrulli (strain AAC00-1) (Acidovorax citrulli), this protein is 4-diphosphocytidyl-2-C-methyl-D-erythritol kinase.